A 212-amino-acid chain; its full sequence is MQNVRDWQWSQPAPQALGLVPMVVEQSGRGERAYDIYSRLLKERIVFMVGPVTDETANLVVAQMLFLESENPDKDIHLYINSPGGSVTAGLSIYDTMNFIKPSVSTLCIGQAASMGAFLLSAGAKGKRFALPNSRVMIHQPLGGFQGQASDFEIHAREILTLKRKLNELMAAHCGRPLEDLERDTDRDNFMNAAQALEYGLIDQVLENRAAV.

Residue Ser114 is the Nucleophile of the active site. The active site involves His139.

Belongs to the peptidase S14 family. In terms of assembly, fourteen ClpP subunits assemble into 2 heptameric rings which stack back to back to give a disk-like structure with a central cavity, resembling the structure of eukaryotic proteasomes.

Its subcellular location is the cytoplasm. It carries out the reaction Hydrolysis of proteins to small peptides in the presence of ATP and magnesium. alpha-casein is the usual test substrate. In the absence of ATP, only oligopeptides shorter than five residues are hydrolyzed (such as succinyl-Leu-Tyr-|-NHMec, and Leu-Tyr-Leu-|-Tyr-Trp, in which cleavage of the -Tyr-|-Leu- and -Tyr-|-Trp bonds also occurs).. Cleaves peptides in various proteins in a process that requires ATP hydrolysis. Has a chymotrypsin-like activity. Plays a major role in the degradation of misfolded proteins. The protein is ATP-dependent Clp protease proteolytic subunit of Laribacter hongkongensis (strain HLHK9).